Consider the following 130-residue polypeptide: Small ribosomal subunit protein uS8 (130 aa).

Belongs to the universal ribosomal protein uS8 family. As to quaternary structure, part of the 30S ribosomal subunit. Contacts proteins S5 and S12.

In terms of biological role, one of the primary rRNA binding proteins, it binds directly to 16S rRNA central domain where it helps coordinate assembly of the platform of the 30S subunit. The polypeptide is Small ribosomal subunit protein uS8 (Tolumonas auensis (strain DSM 9187 / NBRC 110442 / TA 4)).